The chain runs to 337 residues: Undecaprenyl-phosphate 4-deoxy-4-formamido-L-arabinose transferase (337 aa).

Transmembrane regions (helical) follow at residues 235–255 and 270–290; these read LSII…LLII and FVLF…MGLL.

Belongs to the glycosyltransferase 2 family.

It localises to the cell inner membrane. The enzyme catalyses UDP-4-deoxy-4-formamido-beta-L-arabinose + di-trans,octa-cis-undecaprenyl phosphate = 4-deoxy-4-formamido-alpha-L-arabinopyranosyl di-trans,octa-cis-undecaprenyl phosphate + UDP. It functions in the pathway glycolipid biosynthesis; 4-amino-4-deoxy-alpha-L-arabinose undecaprenyl phosphate biosynthesis; 4-amino-4-deoxy-alpha-L-arabinose undecaprenyl phosphate from UDP-4-deoxy-4-formamido-beta-L-arabinose and undecaprenyl phosphate: step 1/2. The protein operates within bacterial outer membrane biogenesis; lipopolysaccharide biosynthesis. Catalyzes the transfer of 4-deoxy-4-formamido-L-arabinose from UDP to undecaprenyl phosphate. The modified arabinose is attached to lipid A and is required for resistance to polymyxin and cationic antimicrobial peptides. The protein is Undecaprenyl-phosphate 4-deoxy-4-formamido-L-arabinose transferase of Pseudomonas savastanoi pv. phaseolicola (strain 1448A / Race 6) (Pseudomonas syringae pv. phaseolicola (strain 1448A / Race 6)).